The following is a 1023-amino-acid chain: Hemolysin, chromosomal (1023 aa).

The next 3 helical transmembrane spans lie at 237–259 (IGAG…ILSN), 267–326 (KAAA…LSIA), and 364–410 (DASL…GILE). 2 N6-myristoyl lysine lipidation sites follow: Lys563 and Lys689. 6 Hemolysin-type calcium-binding repeats span residues 731 to 748 (FGSK…DDHI), 749 to 766 (EGND…NDTL), 767 to 784 (SGGN…NDKL), 785 to 802 (IGGA…DDEL), 815 to 832 (SGGK…ADLL), and 833 to 850 (DGGE…NDIY). Over residues 747–763 (HIEGNDGNDRLYGDKGN) the composition is skewed to basic and acidic residues. Residues 747–780 (HIEGNDGNDRLYGDKGNDTLSGGNGDDQLYGGDG) are disordered.

This sequence belongs to the RTX prokaryotic toxin (TC 1.C.11) family. Post-translationally, myristoylated by HlyC; the toxin only becomes active when modified. Mainly myristoylated, while a minor fraction is acylated with pentadecanoyl (C15:0; 26%) and heptadecanoyl (C17:0; 6%) fatty acyl groups. Fatty acylation is involved in binding to host membranes and promotes the irreversible insertion of Hemolysin into the host cell membrane. Can be activated by both myristoylation and palmitoylation, but HlyC catalyzes lysine myristoylation.

The protein localises to the secreted. It localises to the host cell membrane. In terms of biological role, bacterial hemolysins are exotoxins that attack blood cell membranes and cause cell rupture by forming a pore. In Escherichia coli, this protein is Hemolysin, chromosomal.